Here is a 545-residue protein sequence, read N- to C-terminus: Chaperonin GroEL 2 (545 aa).

ATP-binding positions include Thr-29–Pro-32, Asp-86–Thr-90, Gly-413, Asn-479–Ala-481, and Asp-495.

The protein belongs to the chaperonin (HSP60) family. In terms of assembly, forms a cylinder of 14 subunits composed of two heptameric rings stacked back-to-back. Interacts with the co-chaperonin GroES.

It is found in the cytoplasm. The enzyme catalyses ATP + H2O + a folded polypeptide = ADP + phosphate + an unfolded polypeptide.. Its function is as follows. Together with its co-chaperonin GroES, plays an essential role in assisting protein folding. The GroEL-GroES system forms a nano-cage that allows encapsulation of the non-native substrate proteins and provides a physical environment optimized to promote and accelerate protein folding. The chain is Chaperonin GroEL 2 from Prochlorococcus marinus (strain SARG / CCMP1375 / SS120).